The following is a 142-amino-acid chain: Midkine (142 aa).

The first 21 residues, 1 to 21 (MQPRGLLLLLALLLLAAAAEA), serve as a signal peptide directing secretion. 5 disulfides stabilise this stretch: Cys-36–Cys-60, Cys-44–Cys-69, Cys-51–Cys-73, Cys-83–Cys-115, and Cys-93–Cys-125.

This sequence belongs to the pleiotrophin family.

It is found in the cell surface. It localises to the secreted. The protein localises to the extracellular space. Its subcellular location is the extracellular matrix. The protein resides in the basement membrane. In terms of biological role, has mitogenic activity, and neurite extension activity for PC12 cells. The protein is Midkine (RIHB) of Gallus gallus (Chicken).